The chain runs to 280 residues: Hemin import ATP-binding protein HmuV (280 aa).

An ABC transporter domain is found at 26–260 (LAAAGGLRVH…GLLSEVYDQP (235 aa)). An ATP-binding site is contributed by 59–66 (GPNGAGKS).

The protein belongs to the ABC transporter superfamily. Heme (hemin) importer (TC 3.A.1.14.5) family. As to quaternary structure, the complex is composed of two ATP-binding proteins (HmuV), two transmembrane proteins (HmuU) and a solute-binding protein (HmuT).

It localises to the cell membrane. Part of the ABC transporter complex HmuTUV involved in hemin import. Responsible for energy coupling to the transport system. This chain is Hemin import ATP-binding protein HmuV, found in Streptomyces coelicolor (strain ATCC BAA-471 / A3(2) / M145).